Here is a 106-residue protein sequence, read N- to C-terminus: Cell division protein FtsL (106 aa).

Topologically, residues 1 to 22 are cytoplasmic; it reads MPRQSPPNLAKLIALDLLTVGR. Residues 23–43 form a helical membrane-spanning segment; that stretch reads VPLLLLVLIFSCAMGVVFMTH. Over 44-106 the chain is Periplasmic; it reads HTRQAISAKD…SDKEVVINLK (63 aa).

Belongs to the FtsL family. Part of a complex composed of FtsB, FtsL and FtsQ.

The protein localises to the cell inner membrane. Its function is as follows. Essential cell division protein. May link together the upstream cell division proteins, which are predominantly cytoplasmic, with the downstream cell division proteins, which are predominantly periplasmic. The protein is Cell division protein FtsL of Vibrio cholerae serotype O1 (strain ATCC 39315 / El Tor Inaba N16961).